The sequence spans 152 residues: Ribonuclease H (152 aa).

Positions 1–142 (MNSKVVIYTD…ADKLAVQGRE (142 aa)) constitute an RNase H type-1 domain. Aspartate 10, glutamate 48, aspartate 70, and aspartate 134 together coordinate Mg(2+).

It belongs to the RNase H family. In terms of assembly, monomer. The cofactor is Mg(2+).

The protein localises to the cytoplasm. The enzyme catalyses Endonucleolytic cleavage to 5'-phosphomonoester.. Endonuclease that specifically degrades the RNA of RNA-DNA hybrids. This Rickettsia akari (strain Hartford) protein is Ribonuclease H.